We begin with the raw amino-acid sequence, 329 residues long: Ribose-phosphate pyrophosphokinase B (329 aa).

Residues Asp131, His133, and Glu146 each contribute to the Mg(2+) site. Positions 227–242 (TGKIAIIIDDIADTCK) are binding of phosphoribosylpyrophosphate.

This sequence belongs to the ribose-phosphate pyrophosphokinase family. It depends on Mg(2+) as a cofactor.

The protein resides in the cytoplasm. It carries out the reaction D-ribose 5-phosphate + ATP = 5-phospho-alpha-D-ribose 1-diphosphate + AMP + H(+). Its pathway is metabolic intermediate biosynthesis; 5-phospho-alpha-D-ribose 1-diphosphate biosynthesis; 5-phospho-alpha-D-ribose 1-diphosphate from D-ribose 5-phosphate (route I): step 1/1. This chain is Ribose-phosphate pyrophosphokinase B (prsB), found in Dictyostelium discoideum (Social amoeba).